Here is a 466-residue protein sequence, read N- to C-terminus: Cysteine--tRNA ligase (466 aa).

Cysteine 29 is a binding site for Zn(2+). Positions proline 31–asparagine 41 match the 'HIGH' region motif. 3 residues coordinate Zn(2+): cysteine 209, histidine 234, and glutamate 238. The 'KMSKS' region motif lies at lysine 266 to serine 270. Lysine 269 provides a ligand contact to ATP. Residue serine 270 is modified to Phosphoserine.

Belongs to the class-I aminoacyl-tRNA synthetase family. Monomer. Requires Zn(2+) as cofactor.

The protein resides in the cytoplasm. The catalysed reaction is tRNA(Cys) + L-cysteine + ATP = L-cysteinyl-tRNA(Cys) + AMP + diphosphate. The sequence is that of Cysteine--tRNA ligase (cysS) from Halalkalibacterium halodurans (strain ATCC BAA-125 / DSM 18197 / FERM 7344 / JCM 9153 / C-125) (Bacillus halodurans).